Consider the following 56-residue polypeptide: Large ribosomal subunit protein bL33c (56 aa).

Belongs to the bacterial ribosomal protein bL33 family.

It is found in the plastid. The protein localises to the chloroplast. This Rhodomonas salina (Cryptomonas salina) protein is Large ribosomal subunit protein bL33c.